The chain runs to 61 residues: MAIVPKRKTSKQRKRKRQTHDALKVSTLVSCQNCSVQTIPHVTCKSCGFYKGRQVLKVKSS.

The span at 1–18 (MAIVPKRKTSKQRKRKRQ) shows a compositional bias: basic residues. The tract at residues 1-20 (MAIVPKRKTSKQRKRKRQTH) is disordered.

It belongs to the bacterial ribosomal protein bL32 family.

The chain is Large ribosomal subunit protein bL32 (rpmF) from Mycoplasmopsis pulmonis (strain UAB CTIP) (Mycoplasma pulmonis).